The sequence spans 1411 residues: Early endosome antigen 1 (1411 aa).

Residues 1-27 form a disordered region; sequence MFRRILQRTPGRVGSQGSDLDSSATPI. A compositionally biased stretch (polar residues) spans 15–27; sequence SQGSDLDSSATPI. Residues 41–64 form a C2H2-type zinc finger; sequence FICPQCMKSLGSADELFKHYQAVH. Ser52 and Ser70 each carry phosphoserine. The stretch at 78–1348 forms a coiled coil; the sequence is LALTRDDITL…IKHTQALNRK (1271 aa). Disordered regions lie at residues 476–501 and 1189–1217; these read STEL…QSAT and EKES…KEAK. The span at 481-490 shows a compositional bias: basic and acidic residues; the sequence is HQLEKSKQQH. A compositionally biased stretch (low complexity) spans 491–500; sequence QEQQALQQSA. An FYVE-type zinc finger spans residues 1352 to 1410; it reads DNEVQNCMSCGKCFSVTVRRHHCRQCGNIFCAECSTKNALTPSSKKPVRVCDACFNDLQ. Cys1358, Cys1361, Cys1374, Cys1377, Cys1382, Cys1385, Cys1402, and Cys1405 together coordinate Zn(2+).

In terms of assembly, homodimer. Binds STX6. Binds RAB5A, RAB5B, RAB5C and RAB22A that have been activated by GTP-binding. Interacts with ERBB2. Interacts with RAB31. Interacts with SAMD9 and SAMD9L. May interact with PLEKHF2.

It is found in the cytoplasm. Its subcellular location is the early endosome membrane. In terms of biological role, binds phospholipid vesicles containing phosphatidylinositol 3-phosphate and participates in endosomal trafficking. The chain is Early endosome antigen 1 (Eea1) from Mus musculus (Mouse).